A 71-amino-acid polypeptide reads, in one-letter code: Small ribosomal subunit protein bS21 (71 aa).

The protein belongs to the bacterial ribosomal protein bS21 family.

In Marinobacter nauticus (strain ATCC 700491 / DSM 11845 / VT8) (Marinobacter aquaeolei), this protein is Small ribosomal subunit protein bS21.